A 517-amino-acid polypeptide reads, in one-letter code: Endoglucanase A (517 aa).

Positions 1–25 (MKRSLLKTCSIIAGATIIFSSLSIS) are cleaved as a signal peptide. The active-site Proton donor is the glutamate 185. The Nucleophile role is filled by glutamate 309. The segment covering 382-392 (HPEATEDDKPS) has biased composition (basic and acidic residues). Residues 382 to 424 (HPEATEDDKPSTDVTNPDSGNTKPDSGNTNPGTETTTPTDNEK) are disordered. Residues 393–407 (TDVTNPDSGNTKPDS) show a composition bias toward polar residues. Residues 408-420 (GNTNPGTETTTPT) are compositionally biased toward low complexity. The region spanning 416 to 517 (TTTPTDNEKI…VISNFEYKFD (102 aa)) is the CBM2 domain.

The protein belongs to the glycosyl hydrolase 5 (cellulase A) family.

It catalyses the reaction Endohydrolysis of (1-&gt;4)-beta-D-glucosidic linkages in cellulose, lichenin and cereal beta-D-glucans.. Functionally, hydrolyzes barley beta-glucan, lichenan, carboxymethylcellulose and xylan. It shows preferential activity against the larger cellooligosaccharides (cellohexaose and cellopentaose); cellotetraose is the smallest substrate degraded completely. This Clostridium longisporum protein is Endoglucanase A (celA).